The chain runs to 151 residues: Transcriptional regulator MraZ (151 aa).

SpoVT-AbrB domains are found at residues 5–52 (ANAI…PLSE) and 81–124 (AVDL…DEDA).

The protein belongs to the MraZ family. Forms oligomers.

It is found in the cytoplasm. The protein localises to the nucleoid. The chain is Transcriptional regulator MraZ from Pseudomonas syringae pv. tomato (strain ATCC BAA-871 / DC3000).